We begin with the raw amino-acid sequence, 255 residues long: Phosphate import ATP-binding protein PstB (255 aa).

Residues 10–250 form the ABC transporter domain; the sequence is INIKDLNLWY…PQMKSTEDYI (241 aa). 42–49 contributes to the ATP binding site; that stretch reads GPSGCGKS.

Belongs to the ABC transporter superfamily. Phosphate importer (TC 3.A.1.7) family. The complex is composed of two ATP-binding proteins (PstB), two transmembrane proteins (PstC and PstA) and a solute-binding protein (PstS).

It localises to the cell membrane. It catalyses the reaction phosphate(out) + ATP + H2O = ADP + 2 phosphate(in) + H(+). Functionally, part of the ABC transporter complex PstSACB involved in phosphate import. Responsible for energy coupling to the transport system. In Methanococcoides burtonii (strain DSM 6242 / NBRC 107633 / OCM 468 / ACE-M), this protein is Phosphate import ATP-binding protein PstB.